A 287-amino-acid chain; its full sequence is Undecaprenyl-diphosphatase (287 aa).

Transmembrane regions (helical) follow at residues 1-21, 49-69, 101-121, 126-146, 160-180, 203-223, 232-252, and 267-287; these read MALW…FLPV, MILF…VVFA, LFLL…TLKA, VFAN…LLFW, TGVG…MPGL, YSFF…AIEV, VSVA…IVSL, and FSFY…DLPI.

This sequence belongs to the UppP family.

It is found in the cell inner membrane. The catalysed reaction is di-trans,octa-cis-undecaprenyl diphosphate + H2O = di-trans,octa-cis-undecaprenyl phosphate + phosphate + H(+). Functionally, catalyzes the dephosphorylation of undecaprenyl diphosphate (UPP). Confers resistance to bacitracin. The chain is Undecaprenyl-diphosphatase from Halorhodospira halophila (strain DSM 244 / SL1) (Ectothiorhodospira halophila (strain DSM 244 / SL1)).